Reading from the N-terminus, the 603-residue chain is UPF0313 protein MJ1155 (603 aa).

Residues 285-557 (GIVPVQFSVV…KIQKAICLYR (273 aa)) form the Radical SAM core domain. Residues C299, C303, and C306 each coordinate [4Fe-4S] cluster.

This sequence belongs to the UPF0313 family. [4Fe-4S] cluster is required as a cofactor.

In Methanocaldococcus jannaschii (strain ATCC 43067 / DSM 2661 / JAL-1 / JCM 10045 / NBRC 100440) (Methanococcus jannaschii), this protein is UPF0313 protein MJ1155.